We begin with the raw amino-acid sequence, 94 residues long: Small ubiquitin-related modifier 3 (94 aa).

Lys-11 participates in a covalent cross-link: Glycyl lysine isopeptide (Lys-Gly) (interchain with G-Cter in SUMO). One can recognise a Ubiquitin-like domain in the interval 15-92; that stretch reads DHINLKVAGQ…IDVFQQQTGG (78 aa). Gly-92 is covalently cross-linked (Glycyl lysine isopeptide (Gly-Lys) (interchain with K-? in acceptor proteins)). Residues 93 to 94 constitute a propeptide that is removed on maturation; that stretch reads VC.

This sequence belongs to the ubiquitin family. SUMO subfamily. As to quaternary structure, interacts with sae2 and ube2i. Covalently attached to a number of proteins. Polymeric chains can be formed through Lys-11 cross-linking. In terms of processing, cleavage of precursor form by a sentrin-specific protease is necessary for function.

The protein localises to the cytoplasm. The protein resides in the nucleus. Its subcellular location is the PML body. Functionally, ubiquitin-like protein which can be covalently attached to target lysines either as a monomer or as a lysine-linked polymer. Does not seem to be involved in protein degradation and may function as an antagonist of ubiquitin in the degradation process. Plays a role in a number of cellular processes such as nuclear transport, DNA replication and repair, mitosis and signal transduction. Covalent attachment to its substrates requires prior activation by the E1 complex sae1-sae2 and linkage to the E2 enzyme ube2i. The polypeptide is Small ubiquitin-related modifier 3 (sumo3) (Xenopus laevis (African clawed frog)).